A 432-amino-acid chain; its full sequence is MTNAFNTNLSQAVFNAAQDLMPGGVSSPVRAFKSVNGDPIVFDRVKGPYAWDLDGNRFIDYVGSWGPAICGHSHPEVIAALQEALEKGTSFGAPCELENKLAGMVIEAVPSVEMVRFVNSGTEACMAVLRLMRAFTGRDKLIKFEGCYHGHADMFLVKAGSGVATLGLPDSPGVPRSTTSNTLTAPYNDLEAVKALFAENPDAISGVILEPIVGNAGFIPPEPGFLEGLRELTKENGSLLVFDEVMTGFRISYGGAQERFGVTPDLTTMGKVIGGGLPVGAYGGRKEIMSMVAPAGPMYQAGTLSGNPLAMTAGIKTLELLKQEGTYERLESLSQRLINGICESAKKAGIPITGSFISGMFGFYLCEGPVRNFQEAKQTNAELFGKLHRAMLEKGIYLAPSAFEAGFTSLAHSNDDIETTIKAFEASFSEIV.

The residue at position 271 (Lys-271) is an N6-(pyridoxal phosphate)lysine.

The protein belongs to the class-III pyridoxal-phosphate-dependent aminotransferase family. HemL subfamily. In terms of assembly, homodimer. Requires pyridoxal 5'-phosphate as cofactor.

It is found in the cytoplasm. The catalysed reaction is (S)-4-amino-5-oxopentanoate = 5-aminolevulinate. Its pathway is porphyrin-containing compound metabolism; protoporphyrin-IX biosynthesis; 5-aminolevulinate from L-glutamyl-tRNA(Glu): step 2/2. The protein operates within porphyrin-containing compound metabolism; chlorophyll biosynthesis. This Prochlorococcus marinus (strain MIT 9211) protein is Glutamate-1-semialdehyde 2,1-aminomutase.